Reading from the N-terminus, the 382-residue chain is Anhydro-N-acetylmuramic acid kinase (382 aa).

Gly-9 to Asp-16 lines the ATP pocket.

The protein belongs to the anhydro-N-acetylmuramic acid kinase family.

The enzyme catalyses 1,6-anhydro-N-acetyl-beta-muramate + ATP + H2O = N-acetyl-D-muramate 6-phosphate + ADP + H(+). It functions in the pathway amino-sugar metabolism; 1,6-anhydro-N-acetylmuramate degradation. It participates in cell wall biogenesis; peptidoglycan recycling. Catalyzes the specific phosphorylation of 1,6-anhydro-N-acetylmuramic acid (anhMurNAc) with the simultaneous cleavage of the 1,6-anhydro ring, generating MurNAc-6-P. Is required for the utilization of anhMurNAc either imported from the medium or derived from its own cell wall murein, and thus plays a role in cell wall recycling. This is Anhydro-N-acetylmuramic acid kinase from Bacillus cereus (strain Q1).